The primary structure comprises 331 residues: FMRFamide-related neuropeptides (331 aa).

An N-terminal signal peptide occupies residues 1–25; it reads MRCWSPCSLLVVIVIYCLSSHTSEA. Positions 26–65 are excised as a propeptide; the sequence is FDLAQACVESQRLSLLPICDTIFAVQQEGAQQSADDGMRS. 2 positions are modified to phenylalanine amide: Phe71 and Phe83. Residues 86 to 94 constitute a propeptide that is removed on maturation; it reads NVPDLPFED. A Phenylalanine amide modification is found at Phe100. Positions 103-168 are excised as a propeptide; it reads AAPQLDDLLK…YIDDVEDSDV (66 aa). Positions 122-158 are disordered; that stretch reads QKADETSVRRKRSTDAAPQNNAENPEQKNDSAKITKR. A compositionally biased stretch (basic and acidic residues) spans 146-158; that stretch reads PEQKNDSAKITKR. Phenylalanine amide occurs at positions 174 and 181. A propeptide spanning residues 184 to 194 is cleaved from the precursor; the sequence is NPSDAGNKLTE. Phe200 is subject to Phenylalanine amide. Positions 203–205 are excised as a propeptide; that stretch reads DPE. Phe211 is subject to Phenylalanine amide. Positions 214–216 are excised as a propeptide; sequence SDD. The residue at position 222 (Phe222) is a Phenylalanine amide. A propeptide spanning residues 225 to 236 is cleaved from the precursor; sequence NPSDVEDELEED. Phe242 carries the post-translational modification Phenylalanine amide. Positions 245–254 are excised as a propeptide; it reads GGEDDEEEAE. Residue Phe260 is modified to Phenylalanine amide. Positions 263–265 are excised as a propeptide; it reads DPE. Phe271 carries the post-translational modification Phenylalanine amide. Positions 274-277 are excised as a propeptide; the sequence is SGED. Basic and acidic residues predominate over residues 282-296; it reads RFGRNPDEQEADKRF. A disordered region spans residues 282 to 310; the sequence is RFGRNPDEQEADKRFMRFGRGGEDDEVST. Residue Phe283 is modified to Phenylalanine amide. Residues 286–293 constitute a propeptide that is removed on maturation; it reads NPDEQEAD. Phe299 is subject to Phenylalanine amide. The propeptide occupies 302–312; sequence GGEDDEVSTED. Residue Phe318 is modified to Phenylalanine amide. The propeptide occupies 321 to 331; the sequence is SADKCKGCLEG.

This sequence belongs to the FARP (FMRFamide related peptide) family.

It localises to the secreted. In terms of biological role, excitatory neurotransmitters that directly modulate chromatophore function by activating chromatophore expansion at the chromatophore neuromuscular junction. The protein is FMRFamide-related neuropeptides of Doryteuthis pealeii (Longfin inshore squid).